Reading from the N-terminus, the 565-residue chain is Bicyclogermacrene synthase (565 aa).

4 residues coordinate Mg(2+): aspartate 317, aspartate 321, aspartate 461, and glutamate 469. Positions 317-321 (DDTFD) match the DDXXD motif motif.

The protein belongs to the terpene synthase family. The cofactor is Mg(2+).

It catalyses the reaction (2E,6E)-farnesyl diphosphate = bicyclogermacrene + diphosphate. Its pathway is secondary metabolite biosynthesis; terpenoid biosynthesis. Its function is as follows. Sesquiterpene synthase converting farnesyl diphosphate to bicyclogermacrene as the major product. This is Bicyclogermacrene synthase from Phyla dulcis (Aztec sweet herb).